Reading from the N-terminus, the 197-residue chain is Imidazoleglycerol-phosphate dehydratase (197 aa).

Belongs to the imidazoleglycerol-phosphate dehydratase family.

The protein localises to the cytoplasm. The enzyme catalyses D-erythro-1-(imidazol-4-yl)glycerol 3-phosphate = 3-(imidazol-4-yl)-2-oxopropyl phosphate + H2O. The protein operates within amino-acid biosynthesis; L-histidine biosynthesis; L-histidine from 5-phospho-alpha-D-ribose 1-diphosphate: step 6/9. The chain is Imidazoleglycerol-phosphate dehydratase from Nitrobacter hamburgensis (strain DSM 10229 / NCIMB 13809 / X14).